The following is a 598-amino-acid chain: Elongation factor 4 (598 aa).

The tr-type G domain maps to 2–184; it reads QHIRNFSIIA…AIVARVPAPK (183 aa). GTP is bound by residues 14–19 and 131–134; these read DHGKST and NKID.

Belongs to the TRAFAC class translation factor GTPase superfamily. Classic translation factor GTPase family. LepA subfamily.

It localises to the cell inner membrane. The catalysed reaction is GTP + H2O = GDP + phosphate + H(+). Its function is as follows. Required for accurate and efficient protein synthesis under certain stress conditions. May act as a fidelity factor of the translation reaction, by catalyzing a one-codon backward translocation of tRNAs on improperly translocated ribosomes. Back-translocation proceeds from a post-translocation (POST) complex to a pre-translocation (PRE) complex, thus giving elongation factor G a second chance to translocate the tRNAs correctly. Binds to ribosomes in a GTP-dependent manner. The protein is Elongation factor 4 of Azoarcus sp. (strain BH72).